Consider the following 358-residue polypeptide: Phospho-N-acetylmuramoyl-pentapeptide-transferase (358 aa).

10 helical membrane-spanning segments follow: residues 24 to 44 (FRSIYAMITALLLAFIVGPWV), 73 to 93 (TMGGVLILVCIVVPTLLWADL), 95 to 115 (NVFIWLTLLIIVGYGVLGFVD), 134 to 154 (MFWQVLLAAGVGIFLFYLPGF), 169 to 189 (ELGILFIPFVTLVIVGASNAV), 197 to 217 (GLAIGPVAINAGTYLLFCYIA), 233 to 253 (GAGELAVLCGAMVGAGLGFLW), 261 to 281 (VFMGDVGSLSLGGALGTLAVL), 286 to 306 (ILLVIVGGVFVVEALSVIFQV), and 335 to 355 (KIIVRFWIITIILALVAISTL).

The protein belongs to the glycosyltransferase 4 family. MraY subfamily. Mg(2+) is required as a cofactor.

It localises to the cell inner membrane. It carries out the reaction UDP-N-acetyl-alpha-D-muramoyl-L-alanyl-gamma-D-glutamyl-meso-2,6-diaminopimeloyl-D-alanyl-D-alanine + di-trans,octa-cis-undecaprenyl phosphate = di-trans,octa-cis-undecaprenyl diphospho-N-acetyl-alpha-D-muramoyl-L-alanyl-D-glutamyl-meso-2,6-diaminopimeloyl-D-alanyl-D-alanine + UMP. The protein operates within cell wall biogenesis; peptidoglycan biosynthesis. In terms of biological role, catalyzes the initial step of the lipid cycle reactions in the biosynthesis of the cell wall peptidoglycan: transfers peptidoglycan precursor phospho-MurNAc-pentapeptide from UDP-MurNAc-pentapeptide onto the lipid carrier undecaprenyl phosphate, yielding undecaprenyl-pyrophosphoryl-MurNAc-pentapeptide, known as lipid I. This is Phospho-N-acetylmuramoyl-pentapeptide-transferase from Geobacter sp. (strain M21).